The primary structure comprises 159 residues: Putative pre-16S rRNA nuclease (159 aa).

The protein belongs to the YqgF nuclease family.

It localises to the cytoplasm. In terms of biological role, could be a nuclease involved in processing of the 5'-end of pre-16S rRNA. The polypeptide is Putative pre-16S rRNA nuclease (Bartonella quintana (strain Toulouse) (Rochalimaea quintana)).